The primary structure comprises 59 residues: Prokaryotic ubiquitin-like protein UBact (59 aa).

Positions 1 to 59 are disordered; the sequence is MEMTDPLRREEKKESSPDPKEESGPSRPDVSRPGRDSLLKRMKKVDPKQSEKYKQRTGQ. Deamidated glutamine is present on Gln59. Gln59 participates in a covalent cross-link: Isoglutamyl lysine isopeptide (Gln-Lys) (interchain with K-? in acceptor proteins).

The protein belongs to the ubiquitin-like protein UBact family. May be modified by deamidation of its C-terminal glutamine to glutamate by the adjacently encoded deamidase. This could be a prerequisite to the subsequent conjugation, as shown in the other prokaryotic ubiquitin-like protein Pup.

Its function is as follows. May function as a protein modifier covalently attached to lysine residues of substrate proteins. This may serve to target the modified proteins for degradation by proteasomes. This is Prokaryotic ubiquitin-like protein UBact from Nitrospina gracilis (strain 3/211).